Reading from the N-terminus, the 421-residue chain is UDP-N-acetylglucosamine 1-carboxyvinyltransferase (421 aa).

Position 22-23 (22-23) interacts with phosphoenolpyruvate; that stretch reads KN. R93 contacts UDP-N-acetyl-alpha-D-glucosamine. C117 (proton donor) is an active-site residue. 2-(S-cysteinyl)pyruvic acid O-phosphothioketal is present on C117. Residues 122-126, D308, and I330 contribute to the UDP-N-acetyl-alpha-D-glucosamine site; that span reads RPVDL.

This sequence belongs to the EPSP synthase family. MurA subfamily.

It is found in the cytoplasm. The catalysed reaction is phosphoenolpyruvate + UDP-N-acetyl-alpha-D-glucosamine = UDP-N-acetyl-3-O-(1-carboxyvinyl)-alpha-D-glucosamine + phosphate. Its pathway is cell wall biogenesis; peptidoglycan biosynthesis. Cell wall formation. Adds enolpyruvyl to UDP-N-acetylglucosamine. The chain is UDP-N-acetylglucosamine 1-carboxyvinyltransferase from Pseudomonas putida (strain ATCC 700007 / DSM 6899 / JCM 31910 / BCRC 17059 / LMG 24140 / F1).